Here is a 449-residue protein sequence, read N- to C-terminus: MTEEYWKGVDKIQYVGHQDKKSGLGFQYYNPEEEIMGKKMKDWLRFAVAYWHTFDQRLVDPFGDGTAQRPYDKYTDPMDLALAKVDAAFEFYQKLGVDYLCFHDRDLAPEGDTLRETNANLDKVVDKIVEYQKTSGMKVLWNTSNMFTNPRFVEGAATSPYADVFAYSAAQLKHSLEIGKRVGSENYVFWGGREGYESLWNTNMKQEQEHAAKIFHMAKDYANEIGFDAQMLLEPKPKEPTTHQYDFDAATTIAFMKEYDLDKDFKLNLEGNHANLAGHTYQHEIRVAREAGLLGSLDANQGDKLIGWDIDEYPSNLYETTAAMYEVVENGSIGPRGGLNFDAKPRRSAFAPEDLFLGHIVGMDSFAAGLRVAAAMKQDGFLDNLKADRYSSYKSGVGADIESGKADLKSLEAYAIDKPQSELIAATHSDHLEEIKDTINHYIIDTLSK.

Residues His-103 and Asp-106 contribute to the active site. Positions 234, 270, 273, 298, 309, 311, and 342 each coordinate Mg(2+).

This sequence belongs to the xylose isomerase family. As to quaternary structure, homotetramer. Mg(2+) is required as a cofactor.

The protein resides in the cytoplasm. It carries out the reaction alpha-D-xylose = alpha-D-xylulofuranose. The sequence is that of Xylose isomerase from Levilactobacillus brevis (Lactobacillus brevis).